The primary structure comprises 381 residues: DNA dC-&gt;dU-editing enzyme APOBEC-3G (381 aa).

The interval 1–62 (MKPQTRNTVV…ANIFQGQVSF (62 aa)) is essential for cytoplasmic localization. 2 CMP/dCMP-type deaminase domains span residues 29-143 (HRNT…SQTG) and 211-325 (GQHQ…LRRL). The residue at position 32 (threonine 32) is a Phosphothreonine; by PKA. The Zn(2+) site is built by histidine 67, cysteine 98, and cysteine 101. Residues 206–333 (DPSVLGQHQS…RLDRAGTPIS (128 aa)) form a necessary for homooligomerization region. The interval 210 to 212 (LGQ) is interaction with DNA. Position 254 (histidine 254) interacts with Zn(2+). The active-site Proton donor is the glutamate 256. Zn(2+) is bound by residues cysteine 285 and cysteine 288. The tract at residues 310–317 (RIYDYQRG) is interaction with DNA.

Belongs to the cytidine and deoxycytidylate deaminase family. Homodimer. Homooligomer. Can bind RNA to form ribonucleoprotein complexes of high-molecular-mass (HMM) or low-molecular-mass (LMM). HMM is inactive and heterogeneous in protein composition because of binding nonselectively to cellular RNAs, which in turn are associated with variety of cellular proteins. The LMM form which is enzymatically active has few or no RNAs associated. Its ability to form homooligomer is distinct from its ability to assemble into HMM. Interacts with APOBEC3B, APOBEC3F, MOV10, AGO2, EIF4E, EIF4ENIF1, DCP2 and DDX6 in an RNA-dependent manner. Interacts with AGO1, AGO3 and PKA/PRKACA. Zn(2+) serves as cofactor.

It localises to the cytoplasm. The protein localises to the nucleus. It is found in the P-body. The catalysed reaction is a 2'-deoxycytidine in single-stranded DNA + H2O + H(+) = a 2'-deoxyuridine in single-stranded DNA + NH4(+). In terms of biological role, DNA deaminase (cytidine deaminase) which acts as an inhibitor of retrovirus replication and retrotransposon mobility. After the penetration of retroviral nucleocapsids into target cells of infection and the initiation of reverse transcription, it can induce the conversion of cytosine to uracil in the minus-sense single-strand viral DNA, leading to G-to-A hypermutations in the subsequent plus-strand viral DNA. The resultant detrimental levels of mutations in the proviral genome, along with a deamination-independent mechanism that works prior to the proviral integration, together exert efficient antiretroviral effects in infected target cells. Selectively targets single-stranded DNA and does not deaminate double-stranded DNA or single- or double-stranded RNA. The protein is DNA dC-&gt;dU-editing enzyme APOBEC-3G (APOBEC3G) of Lagothrix lagotricha (Brown woolly monkey).